We begin with the raw amino-acid sequence, 289 residues long: Mitochondrial fission regulator 1-like (289 aa).

Thr-27 carries the phosphothreonine modification. 8 positions are modified to phosphoserine: Ser-38, Ser-100, Ser-107, Ser-221, Ser-222, Ser-235, Ser-258, and Ser-270.

It belongs to the MTFR1 family. Post-translationally, phosphorylated by AMPK. Upon stress, phosphorylation by AMPK is sufficient to induce mitochondrial fragmentation.

The protein localises to the mitochondrion outer membrane. In terms of biological role, mitochondrial protein required for adaptation of miochondrial dynamics to metabolic changes. Regulates mitochondrial morphology at steady state and mediates AMPK-dependent stress-induced mitochondrial fragmentation via the control of OPA1 levels. The sequence is that of Mitochondrial fission regulator 1-like (MTFR1L) from Bos taurus (Bovine).